Consider the following 396-residue polypeptide: Serpin-ZXA (396 aa).

Residues 343–367 (GTEAAAATAAVITLRSAPIAEDFVA) are RCL.

Belongs to the serpin family.

Its function is as follows. Probable serine protease inhibitor. In Oryza sativa subsp. japonica (Rice), this protein is Serpin-ZXA.